We begin with the raw amino-acid sequence, 284 residues long: F-box only protein 6 (284 aa).

The F-box domain occupies 1-48 (MVNINELPENILLELFTHVPAPQLLRNCRLVCSLWRDLIDVMTLWKRK). Residues 69-250 (FYILCSLQRN…VTNSSIIVSH (182 aa)) form the FBA domain. A phosphoserine mark is found at S249, S268, S275, S278, and S283.

As to quaternary structure, part of a SCF (SKP1-cullin-F-box) protein ligase complex. Interacts with VCP, CHEK1 and CUL1.

It localises to the cytoplasm. It functions in the pathway protein modification; protein ubiquitination. In terms of biological role, substrate-recognition component of some SCF (SKP1-CUL1-F-box protein)-type E3 ubiquitin ligase complexes. Involved in endoplasmic reticulum-associated degradation pathway (ERAD) for misfolded lumenal proteins by recognizing and binding sugar chains on unfolded glycoproteins that are retrotranslocated into the cytosol and promoting their ubiquitination and subsequent degradation. Able to recognize and bind denatured glycoproteins, which are modified with not only high-mannose but also complex-type oligosaccharides. Also recognizes sulfated glycans. Also involved in DNA damage response by specifically recognizing activated CHEK1 (phosphorylated on 'Ser-345'), promoting its ubiquitination and degradation. Ubiquitination of CHEK1 is required to ensure that activated CHEK1 does not accumulate as cells progress through S phase, or when replication forks encounter transient impediments during normal DNA replication. This is F-box only protein 6 (Fbxo6) from Rattus norvegicus (Rat).